The chain runs to 82 residues: Small ribosomal subunit protein bS16 (82 aa).

The protein belongs to the bacterial ribosomal protein bS16 family.

The protein is Small ribosomal subunit protein bS16 of Francisella tularensis subsp. tularensis (strain FSC 198).